We begin with the raw amino-acid sequence, 462 residues long: Retinoic acid receptor RXR-alpha (462 aa).

The segment at 1 to 107 is disordered; it reads MDTKHFLPLD…MNPVSSSEDI (107 aa). A modulating region spans residues 1–134; that stretch reads MDTKHFLPLD…GNMASFTKHI (134 aa). Residue K4 forms a Glycyl lysine isopeptide (Lys-Gly) (interchain with G-Cter in SUMO2) linkage. Residues 11-24 show a composition bias toward polar residues; the sequence is FSTQVNSSLTSPTG. Phosphoserine is present on residues S21 and S27. Positions 49–58 are enriched in polar residues; sequence SPISTLSSPI. S56 and S70 each carry phosphoserine; by MAPK8 and MAPK9. Residues 78–104 are compositionally biased toward polar residues; the sequence is SVPTTPTLGFSTGSPQLSSPMNPVSSS. At T82 the chain carries Phosphothreonine; by MAPK8 and MAPK9. K108 is covalently cross-linked (Glycyl lysine isopeptide (Lys-Gly) (interchain with G-Cter in SUMO)). The residue at position 129 (S129) is a Phosphoserine. 2 residues coordinate Zn(2+): C135 and C138. The NR C4-type zinc-finger motif lies at 135 to 155; the sequence is CAICGDRSSGKHYGVYSCEGC. The nuclear receptor DNA-binding region spans 135–200; the sequence is CAICGDRSSG…RYQKCLAMGM (66 aa). K145 bears the N6-acetyllysine; by EP300 mark. Zn(2+) is bound by residues C152 and C155. A nuclear localization signal region spans residues 160 to 165; the sequence is KRTVRK. Residues C171, C177, C187, and C190 each contribute to the Zn(2+) site. The NR C4-type zinc-finger motif lies at 171-195; sequence CRDNKDCLIDKRQRNRCQYCRYQKC. Positions 201–224 are hinge; it reads KREAVQEERQRGKDRNENEVESTS. Basic and acidic residues predominate over residues 206–218; it reads QEERQRGKDRNEN. The interval 206–228 is disordered; it reads QEERQRGKDRNENEVESTSSANE. The NR LBD domain maps to 227 to 458; the sequence is NEDMPVERIL…TFLMEMLEAP (232 aa). A Phosphoserine modification is found at S259. S260 is modified (phosphoserine; by MAPK8 and MAPK9). Residues R316 and A327 each coordinate 9-cis-retinoate. Positions 316 and 327 each coordinate all-trans-retinoate. The tract at residues 348–368 is required for nuclear export; that stretch reads RVLTELVSKMRDMQMDKTELG.

Belongs to the nuclear hormone receptor family. NR2 subfamily. As to quaternary structure, homodimer. Heterodimer (via C-terminus) with RARA; required for ligand-dependent retinoic acid receptor transcriptional activity; association with RARA is enhanced by pulsatile shear stress. Heterodimer with PPARA (via the leucine-like zipper in the LBD); the interaction is required for PPARA transcriptional activity. Heterodimerizes with PPARG. Heterodimerizes (via NR LBD) with RARB. Heterodimerizes with NR1H4; the heterodimerization enhances the binding affinity for LXXLL motifs from coactivators. Interacts with NCOA3 and NCOA6 coactivators. Interacts with coactivator FAM120B. Interacts with coactivator PELP1, SENP6, SFPQ, DNTTIP2 and RNF8. Interacts with PRMT2. Interacts with ASXL1. Interacts with BHLHE40/DEC1, BHLHE41/DEC2, NCOR1 and NCOR2. Interacts in a ligand-dependent fashion with MED1 and NCOA1. Interacts with VDR. Interacts with EP300; the interaction is decreased by 9-cis retinoic acid. Heterodimer (via C-terminus) with NR4A1 (via DNA-binding domain); DNA-binding of the heterodimer is enhanced by 9-cis retinoic acid. NR4A1 competes with EP300 for interaction with RXRA and thereby attenuates EP300 mediated acetylation of RXRA. In the absence of hormonal ligand, interacts with TACC1. Interacts ith IGFBP3. In terms of assembly, (Microbial infection) Interacts (via the DNA binding domain) with HCV core protein; the interaction enhances the transcriptional activities of the RXRA/RARA and the RXRA/PPARA heterodimers. In terms of processing, acetylated by EP300; acetylation enhances DNA binding and transcriptional activity. Phosphorylated on serine and threonine residues mainly in the N-terminal modulating domain. Constitutively phosphorylated on Ser-21 in the presence or absence of ligand. Under stress conditions, hyperphosphorylated by activated JNK on Ser-56, Ser-70, Thr-82 and Ser-260. Phosphorylated on Ser-27, in vitro, by PKA. This phosphorylation is required for repression of cAMP-mediated transcriptional activity of RARA. Post-translationally, ubiquitinated by UBR5, leading to its degradation: UBR5 specifically recognizes and binds ligand-bound RXRA when it is not associated with coactivators (NCOAs). In presence of NCOAs, the UBR5-degron is not accessible, preventing its ubiquitination and degradation. In terms of processing, sumoylation negatively regulates transcriptional activity. Desumoylated specifically by SENP6. In terms of tissue distribution, expressed in lung fibroblasts (at protein level). Expressed in monocytes. Highly expressed in liver, also found in kidney and brain.

It localises to the nucleus. The protein localises to the cytoplasm. It is found in the mitochondrion. Its function is as follows. Receptor for retinoic acid that acts as a transcription factor. Forms homo- or heterodimers with retinoic acid receptors (RARs) and binds to target response elements in response to their ligands, all-trans or 9-cis retinoic acid, to regulate gene expression in various biological processes. The RAR/RXR heterodimers bind to the retinoic acid response elements (RARE) composed of tandem 5'-AGGTCA-3' sites known as DR1-DR5 to regulate transcription. The high affinity ligand for retinoid X receptors (RXRs) is 9-cis retinoic acid. In the absence of ligand, the RXR-RAR heterodimers associate with a multiprotein complex containing transcription corepressors that induce histone deacetylation, chromatin condensation and transcriptional suppression. On ligand binding, the corepressors dissociate from the receptors and coactivators are recruited leading to transcriptional activation. Serves as a common heterodimeric partner for a number of nuclear receptors, such as RARA, RARB and PPARA. The RXRA/RARB heterodimer can act as a transcriptional repressor or transcriptional activator, depending on the RARE DNA element context. The RXRA/PPARA heterodimer is required for PPARA transcriptional activity on fatty acid oxidation genes such as ACOX1 and the P450 system genes. Together with RARA, positively regulates microRNA-10a expression, thereby inhibiting the GATA6/VCAM1 signaling response to pulsatile shear stress in vascular endothelial cells. Acts as an enhancer of RARA binding to RARE DNA element. May facilitate the nuclear import of heterodimerization partners such as VDR and NR4A1. Promotes myelin debris phagocytosis and remyelination by macrophages. Plays a role in the attenuation of the innate immune system in response to viral infections, possibly by negatively regulating the transcription of antiviral genes such as type I IFN genes. Involved in the regulation of calcium signaling by repressing ITPR2 gene expression, thereby controlling cellular senescence. In Homo sapiens (Human), this protein is Retinoic acid receptor RXR-alpha (RXRA).